A 336-amino-acid polypeptide reads, in one-letter code: Dihydroorotate dehydrogenase (quinone) (336 aa).

FMN is bound by residues 62-66 and Thr-86; that span reads AGLDK. A substrate-binding site is contributed by Lys-66. 111 to 115 contacts substrate; sequence NRMGF. Asn-139 and Asn-172 together coordinate FMN. Asn-172 is a binding site for substrate. Ser-175 acts as the Nucleophile in catalysis. Residue Asn-177 participates in substrate binding. Residues Lys-217 and Thr-245 each coordinate FMN. 246–247 lines the substrate pocket; it reads NT. Residues Gly-268, Gly-297, and 318-319 each bind FMN; that span reads YS.

The protein belongs to the dihydroorotate dehydrogenase family. Type 2 subfamily. As to quaternary structure, monomer. It depends on FMN as a cofactor.

The protein resides in the cell membrane. It catalyses the reaction (S)-dihydroorotate + a quinone = orotate + a quinol. Its pathway is pyrimidine metabolism; UMP biosynthesis via de novo pathway; orotate from (S)-dihydroorotate (quinone route): step 1/1. Its function is as follows. Catalyzes the conversion of dihydroorotate to orotate with quinone as electron acceptor. The sequence is that of Dihydroorotate dehydrogenase (quinone) from Salmonella arizonae (strain ATCC BAA-731 / CDC346-86 / RSK2980).